The following is a 262-amino-acid chain: (5R,7aS)-5-hydroxy-7a-methyl-1-oxo-2,3,5,6,7,7a-hexahydro-1H-indene-carboxyl-CoA reductase (262 aa).

The NAD(+) site is built by Asp50, Asp77, Val78, Asn104, Tyr170, Lys174, and Ala203. Tyr170 functions as the Proton acceptor in the catalytic mechanism.

Belongs to the short-chain dehydrogenases/reductases (SDR) family.

The enzyme catalyses (5R,7aS)-5-hydroxy-7a-methyl-1-oxo-2,3,5,6,7,7a-hexahydro-1H-indene-carboxyl-CoA + NAD(+) = (7aS)-7a-methyl-1,5-dioxo-2,3,5,6,7,7a-hexahydro-1H-indene-carboxyl-CoA + NADH + H(+). The protein operates within steroid metabolism; cholesterol degradation. With respect to regulation, requires the presence of IpdC. Functionally, involved in the final steps of cholesterol and steroid degradation. Probably catalyzes the oxidation of the 5-OH group of (5R,7aS)-5-hydroxy-7a-methyl-1-oxo-2,3,5,6,7,7a-hexahydro-1H-indene-carboxyl-CoA, leading to the formation of HIEC-CoA. This chain is (5R,7aS)-5-hydroxy-7a-methyl-1-oxo-2,3,5,6,7,7a-hexahydro-1H-indene-carboxyl-CoA reductase, found in Mycobacterium tuberculosis (strain ATCC 25618 / H37Rv).